The following is a 67-amino-acid chain: Surface composition regulator (67 aa).

It belongs to the GlgS family.

In terms of biological role, major determinant of cell surface composition. Negatively regulates motility, adhesion and synthesis of biofilm exopolysaccharides. The chain is Surface composition regulator from Salmonella paratyphi A (strain ATCC 9150 / SARB42).